Consider the following 857-residue polypeptide: Leucine-rich repeat extensin-like protein 5 (857 aa).

Residues 1–31 (MKTKMMMKNTSLIFVLLFITFFFTSISYSLS) form the signal peptide. The stretch at 32–53 (LTFNGDLSDNEVRLITQRQLLY) is one LRR 1 repeat. A glycan (N-linked (GlcNAc...) asparagine) is linked at N98. LRR repeat units lie at residues 125–149 (IRTVAGIDLNHADIAGYLPQELGLL), 150–172 (TDLALFHINSNRFCGTVPHRFNR), 174–197 (KLLFELDLSNNRFAGIFPTVVLQL), 198–221 (PSLKFLDLRFNEFEGPVPRELFSK), 223–244 (LDAIFINHNRFRFELPDNLGDS), 246–267 (VSVIVVANNHFHGCIPTSLGDM), 268–291 (RNLEEIIFMENGFNSCLPSQIGRL), 292–315 (KNVTVFDFSFNELVGSLPASIGGM), 316–339 (VSMEQLNVAHNRFSGKIPATICQL), and 341–362 (RLENFTFSYNFFTGEPPVCLGL). Residue N293 is glycosylated (N-linked (GlcNAc...) asparagine). N344 carries an N-linked (GlcNAc...) asparagine glycan. Disordered regions lie at residues 406–776 (PPVV…EYSP) and 817–839 (YSPPPPPVIHHSQPPPPPIYEGP). 2 stretches are compositionally biased toward pro residues: residues 408–571 (VVVP…PTPI) and 579–768 (PIIP…PQSH). The segment at 615-857 (SPPPSTPTPV…YASPPPPPFY (243 aa)) is contains the Ser-Pro(4) repeats.

In terms of processing, hydroxylated on proline residues in the S-P-P-P-P repeat. Post-translationally, O-glycosylated on hydroxyprolines. In terms of tissue distribution, expressed in roots, leaves and flowers.

It is found in the secreted. Its subcellular location is the cell wall. Functionally, modulates cell morphogenesis by regulating cell wall formation and assembly, and/or growth polarization. The protein is Leucine-rich repeat extensin-like protein 5 (LRX5) of Arabidopsis thaliana (Mouse-ear cress).